The primary structure comprises 100 residues: Urease subunit gamma (100 aa).

Belongs to the urease gamma subunit family. In terms of assembly, heterotrimer of UreA (gamma), UreB (beta) and UreC (alpha) subunits. Three heterotrimers associate to form the active enzyme.

The protein resides in the cytoplasm. It carries out the reaction urea + 2 H2O + H(+) = hydrogencarbonate + 2 NH4(+). It participates in nitrogen metabolism; urea degradation; CO(2) and NH(3) from urea (urease route): step 1/1. In Prochlorococcus marinus (strain AS9601), this protein is Urease subunit gamma.